Consider the following 457-residue polypeptide: Transcription termination factor Rho (457 aa).

The interval methionine 1–aspartate 23 is disordered. The region spanning leucine 77–aspartate 152 is the Rho RNA-BD domain. ATP is bound by residues glycine 200 to alanine 205, arginine 212 to valine 217, and arginine 243.

Belongs to the Rho family. As to quaternary structure, homohexamer. The homohexamer assembles into an open ring structure.

Functionally, facilitates transcription termination by a mechanism that involves Rho binding to the nascent RNA, activation of Rho's RNA-dependent ATPase activity, and release of the mRNA from the DNA template. The chain is Transcription termination factor Rho from Rickettsia prowazekii (strain Madrid E).